A 551-amino-acid polypeptide reads, in one-letter code: Enhancer of mRNA-decapping protein 3 (551 aa).

The 63-residue stretch at 1–63 (MSQFVGFGVQ…LKDLKVLTVA (63 aa)) folds into the Sm domain. A disordered region spans residues 64–92 (SQSGKRKQQRQQQQQNDYNQNRGEHIDWQ). The 37-residue stretch at 93–129 (DDDVSKIKQQEDFDFQRNLGMFNKKDVFAQLKQNDDI) folds into the DFDF domain. Ser257 and Ser261 each carry phosphoserine. The region spanning 288-527 (VQLLEMESIT…DIGIPQGAYS (240 aa)) is the YjeF N-terminal domain.

Belongs to the EDC3 family. As to quaternary structure, homodimer. Interacts with DCP2.

It localises to the cytoplasm. Its subcellular location is the P-body. Functionally, stimulates decapping of both stable and unstable mRNA during mRNA decay. Does not affect nonsense-mediated mRNA decay. Required for normal P-body assembly. In Saccharomyces cerevisiae (strain ATCC 204508 / S288c) (Baker's yeast), this protein is Enhancer of mRNA-decapping protein 3 (EDC3).